Reading from the N-terminus, the 278-residue chain is MRLDLDFGRGLVAHVMLDNVSEEQYQQISDYFVPLVNKPKLKSRDAIGQAFVMATEVCPDANPSDLWHHVLYRIYIREKIGTDPSQSWVRTSGEAFEVALVERYNPVLARHGIRLTALFKGQKGLALTRMGVADRVGSRKVDVMIEKQGGGRSPDAEGFGVVGGIHAKVSLAERVSDDIPASRIMMGEGLLSVLSTLDVKSFPPPHGDLVNRGELGTPDRPSDKRNYIEGHGDFSACFSYNLRTSPSNATTPSGRHIYVSGFSGQDDEFTDYLVAQLA.

It belongs to the BsaWI type II restriction endonuclease family.

The catalysed reaction is Endonucleolytic cleavage of DNA to give specific double-stranded fragments with terminal 5'-phosphates.. In terms of biological role, a P subtype restriction enzyme that recognizes the double-stranded sequence 5'-ACCGGT-3' and cleaves after A-1. The sequence is that of Type II restriction enzyme AgeI (ageIR) from Thalassovita gelatinovora (Thalassobius gelatinovorus).